The sequence spans 227 residues: Triosephosphate isomerase (227 aa).

Residue 6 to 8 (NLK) coordinates substrate. His-85 functions as the Electrophile in the catalytic mechanism. Catalysis depends on Glu-152, which acts as the Proton acceptor. The substrate site is built by Gly-158 and Ser-188.

Belongs to the triosephosphate isomerase family. As to quaternary structure, homodimer.

It is found in the cytoplasm. It carries out the reaction D-glyceraldehyde 3-phosphate = dihydroxyacetone phosphate. It functions in the pathway carbohydrate biosynthesis; gluconeogenesis. Its pathway is carbohydrate degradation; glycolysis; D-glyceraldehyde 3-phosphate from glycerone phosphate: step 1/1. Functionally, involved in the gluconeogenesis. Catalyzes stereospecifically the conversion of dihydroxyacetone phosphate (DHAP) to D-glyceraldehyde-3-phosphate (G3P). This is Triosephosphate isomerase from Campylobacter concisus (strain 13826).